The primary structure comprises 290 residues: Urease accessory protein UreD (290 aa).

It belongs to the UreD family. As to quaternary structure, ureD, UreF and UreG form a complex that acts as a GTP-hydrolysis-dependent molecular chaperone, activating the urease apoprotein by helping to assemble the nickel containing metallocenter of UreC. The UreE protein probably delivers the nickel.

It localises to the cytoplasm. In terms of biological role, required for maturation of urease via the functional incorporation of the urease nickel metallocenter. This Paenarthrobacter aurescens (strain TC1) protein is Urease accessory protein UreD.